The sequence spans 122 residues: ILLCAKHMEAAVTQSPRSKVAVTGGKVTLSCHQTNNHDYMYWYRQDTGHGLRLIHYSYVADSTEKGDIPDGYKASRPSQENFSLILELASLSQTAVYFCASSGTGGALDTQYFGPGTRLLVL.

The first 7 residues, 1–7, serve as a signal peptide directing secretion; that stretch reads ILLCAKH. A v segment region spans residues 8–103; sequence MEAAVTQSPR…TAVYFCASSG (96 aa). The cysteines at positions 31 and 99 are disulfide-linked. Positions 104–108 are d segment; the sequence is TGGAL. The tract at residues 109–122 is j segment; the sequence is DTQYFGPGTRLLVL.

This is T-cell receptor beta chain V region C5 from Mus musculus (Mouse).